We begin with the raw amino-acid sequence, 125 residues long: Large ribosomal subunit protein bL12 (125 aa).

It belongs to the bacterial ribosomal protein bL12 family. In terms of assembly, homodimer. Part of the ribosomal stalk of the 50S ribosomal subunit. Forms a multimeric L10(L12)X complex, where L10 forms an elongated spine to which 2 to 4 L12 dimers bind in a sequential fashion. Binds GTP-bound translation factors.

Forms part of the ribosomal stalk which helps the ribosome interact with GTP-bound translation factors. Is thus essential for accurate translation. The sequence is that of Large ribosomal subunit protein bL12 from Anaeromyxobacter sp. (strain Fw109-5).